The sequence spans 710 residues: MRLSLSSQEMELVRKFLGREPKEEEWLVVDALWSEHCSYKSSKIFLRSFPSEGERVVMGIEDWQDAGALDVGDGWAVVLKLESHNHPSAIDPFNGAATGIGGIIRDIISKGARPIALLDMIRVGNLNNSRNRWLLKNIIAGIGFYGNSIGVPVVAGELAFDETYNDNPLVDVAGLGVVKKDKIVPSVVKEAGLKIVLVGLTGLDGLGGASFASRKLSGEDEIGAVQIADPFAGKIVLDVTLQIADKVEAIKDLGGGGLVVGITEMANGLGVEVELDKIPLRVKDLTPGEILVSETQERMVFAVKPERVKEVCEAFEYYEYPCAVIGEFTNDTSIRFLYKGKEVVNLPSSLLLNPPRYKWGVKKTKYSVYYEKPNINLEVAVKEILSYPDLVSKFWAYSQFDYEVGTSTVLKPGEADSGLISLPNGKLLAIKGDANPDLCAEDSYECGRYIVAEAYRNLATVGAKGIGVVDHLQFGDPKKPEVYYQFVEAVRGIAEASKYFGTPIVGGKVSFYNENKEGKPIKPTPLVVMAGLVQDKFLRPKITEGASIIMIGFTREEMGGSLLAKIFGNYGDVPKTRLNEELLSSELVIKAINDGKIIFAKDISKGGLVGALLPILVRGFGVSIDTNLIPSDTDDVISKLFSENGGRFIVLSEREDDINWLESQSRGIYVSKIGEVTREQYVMWLREGKKIDLTKEVNNYHRYLEEVTSD.

Residue histidine 36 is part of the active site. ATP contacts are provided by tyrosine 39 and lysine 80. Glutamate 82 is a binding site for Mg(2+). Residues 83–86 (SHNH) and arginine 105 each bind substrate. Catalysis depends on histidine 84, which acts as the Proton acceptor. Residue aspartate 106 participates in Mg(2+) binding. Residue glutamine 226 participates in substrate binding. Aspartate 252 provides a ligand contact to Mg(2+). Residue 294 to 296 (ETQ) participates in substrate binding. Aspartate 470 and glycine 507 together coordinate ATP. Serine 510 contacts substrate.

Belongs to the FGAMS family. In terms of assembly, monomer. Part of the FGAM synthase complex composed of 1 PurL, 1 PurQ and 2 PurS subunits.

Its subcellular location is the cytoplasm. It carries out the reaction N(2)-formyl-N(1)-(5-phospho-beta-D-ribosyl)glycinamide + L-glutamine + ATP + H2O = 2-formamido-N(1)-(5-O-phospho-beta-D-ribosyl)acetamidine + L-glutamate + ADP + phosphate + H(+). The protein operates within purine metabolism; IMP biosynthesis via de novo pathway; 5-amino-1-(5-phospho-D-ribosyl)imidazole from N(2)-formyl-N(1)-(5-phospho-D-ribosyl)glycinamide: step 1/2. In terms of biological role, part of the phosphoribosylformylglycinamidine synthase complex involved in the purines biosynthetic pathway. Catalyzes the ATP-dependent conversion of formylglycinamide ribonucleotide (FGAR) and glutamine to yield formylglycinamidine ribonucleotide (FGAM) and glutamate. The FGAM synthase complex is composed of three subunits. PurQ produces an ammonia molecule by converting glutamine to glutamate. PurL transfers the ammonia molecule to FGAR to form FGAM in an ATP-dependent manner. PurS interacts with PurQ and PurL and is thought to assist in the transfer of the ammonia molecule from PurQ to PurL. In Sulfolobus acidocaldarius (strain ATCC 33909 / DSM 639 / JCM 8929 / NBRC 15157 / NCIMB 11770), this protein is Phosphoribosylformylglycinamidine synthase subunit PurL.